The primary structure comprises 154 residues: Myoglobin (154 aa).

In terms of domain architecture, Globin spans 2-148 (VLSEGEWQLV…FRKDIAAKYK (147 aa)). At Ser-4 the chain carries Phosphoserine. His-65 contacts nitrite. His-65 serves as a coordination point for O2. Thr-68 carries the post-translational modification Phosphothreonine. His-94 contacts heme b.

It belongs to the globin family. Monomeric.

Its subcellular location is the cytoplasm. It localises to the sarcoplasm. The enzyme catalyses Fe(III)-heme b-[protein] + nitric oxide + H2O = Fe(II)-heme b-[protein] + nitrite + 2 H(+). The catalysed reaction is H2O2 + AH2 = A + 2 H2O. Monomeric heme protein which primary function is to store oxygen and facilitate its diffusion within muscle tissues. Reversibly binds oxygen through a pentacoordinated heme iron and enables its timely and efficient release as needed during periods of heightened demand. Depending on the oxidative conditions of tissues and cells, and in addition to its ability to bind oxygen, it also has a nitrite reductase activity whereby it regulates the production of bioactive nitric oxide. Under stress conditions, like hypoxia and anoxia, it also protects cells against reactive oxygen species thanks to its pseudoperoxidase activity. This chain is Myoglobin (MB), found in Physeter macrocephalus (Sperm whale).